We begin with the raw amino-acid sequence, 493 residues long: Xylulose kinase (493 aa).

84 to 85 (QH) contacts substrate. Aspartate 247 (proton acceptor) is an active-site residue.

Belongs to the FGGY kinase family.

It catalyses the reaction D-xylulose + ATP = D-xylulose 5-phosphate + ADP + H(+). Functionally, catalyzes the phosphorylation of D-xylulose to D-xylulose 5-phosphate. The chain is Xylulose kinase from Haemophilus influenzae (strain ATCC 51907 / DSM 11121 / KW20 / Rd).